The sequence spans 641 residues: Phosphomethylpyrimidine synthase (641 aa).

Substrate is bound by residues asparagine 221, methionine 250, tyrosine 279, histidine 315, 335–337 (SRG), 376–379 (DGLR), and glutamate 415. Residue histidine 419 coordinates Zn(2+). Tyrosine 442 is a substrate binding site. Zn(2+) is bound at residue histidine 483. [4Fe-4S] cluster is bound by residues cysteine 563, cysteine 566, and cysteine 571.

Belongs to the ThiC family. Homodimer. It depends on [4Fe-4S] cluster as a cofactor.

The catalysed reaction is 5-amino-1-(5-phospho-beta-D-ribosyl)imidazole + S-adenosyl-L-methionine = 4-amino-2-methyl-5-(phosphooxymethyl)pyrimidine + CO + 5'-deoxyadenosine + formate + L-methionine + 3 H(+). The protein operates within cofactor biosynthesis; thiamine diphosphate biosynthesis. In terms of biological role, catalyzes the synthesis of the hydroxymethylpyrimidine phosphate (HMP-P) moiety of thiamine from aminoimidazole ribotide (AIR) in a radical S-adenosyl-L-methionine (SAM)-dependent reaction. This Rhodopseudomonas palustris (strain TIE-1) protein is Phosphomethylpyrimidine synthase.